Consider the following 360-residue polypeptide: Aminomethyltransferase (360 aa).

Belongs to the GcvT family. As to quaternary structure, the glycine cleavage system is composed of four proteins: P, T, L and H.

It catalyses the reaction N(6)-[(R)-S(8)-aminomethyldihydrolipoyl]-L-lysyl-[protein] + (6S)-5,6,7,8-tetrahydrofolate = N(6)-[(R)-dihydrolipoyl]-L-lysyl-[protein] + (6R)-5,10-methylene-5,6,7,8-tetrahydrofolate + NH4(+). Functionally, the glycine cleavage system catalyzes the degradation of glycine. In Bdellovibrio bacteriovorus (strain ATCC 15356 / DSM 50701 / NCIMB 9529 / HD100), this protein is Aminomethyltransferase.